The chain runs to 509 residues: Histidine--tRNA ligase, cytoplasmic (509 aa).

At alanine 2 the chain carries N-acetylalanine. Positions 3-59 constitute a WHEP-TRS domain; sequence DRAALEDLVRVQGERVRGLKQQKASAEQIEEEVAKLLKLKAQLGPDEGKPKFVLKTP. Position 66 is a phosphoserine (serine 66). L-histidine contacts are provided by residues 130–132, arginine 157, glutamine 173, aspartate 177, arginine 326, and 330–331; these read DLT and YY. Serine 356 is modified (phosphoserine).

The protein belongs to the class-II aminoacyl-tRNA synthetase family. Homodimer.

It is found in the cytoplasm. It carries out the reaction tRNA(His) + L-histidine + ATP = L-histidyl-tRNA(His) + AMP + diphosphate + H(+). In terms of biological role, catalyzes the ATP-dependent ligation of histidine to the 3'-end of its cognate tRNA, via the formation of an aminoacyl-adenylate intermediate (His-AMP). Plays a role in axon guidance. The sequence is that of Histidine--tRNA ligase, cytoplasmic (HARS1) from Bos taurus (Bovine).